Consider the following 306-residue polypeptide: Agmatinase (306 aa).

Mn(2+) is bound by residues histidine 126, aspartate 149, histidine 151, aspartate 153, aspartate 230, and aspartate 232.

This sequence belongs to the arginase family. Agmatinase subfamily. Requires Mn(2+) as cofactor.

It catalyses the reaction agmatine + H2O = urea + putrescine. The protein operates within amine and polyamine biosynthesis; putrescine biosynthesis via agmatine pathway; putrescine from agmatine: step 1/1. Functionally, catalyzes the formation of putrescine from agmatine. The protein is Agmatinase of Enterobacter sp. (strain 638).